The sequence spans 538 residues: Chaperonin GroEL 1 (538 aa).

ATP-binding positions include 30 to 33 (TLGP), K51, 87 to 91 (DGTTT), G415, 479 to 481 (NAA), and D495.

It belongs to the chaperonin (HSP60) family. Forms a cylinder of 14 subunits composed of two heptameric rings stacked back-to-back. Interacts with the co-chaperonin GroES.

It localises to the cytoplasm. The enzyme catalyses ATP + H2O + a folded polypeptide = ADP + phosphate + an unfolded polypeptide.. Its function is as follows. Together with its co-chaperonin GroES, plays an essential role in assisting protein folding. The GroEL-GroES system forms a nano-cage that allows encapsulation of the non-native substrate proteins and provides a physical environment optimized to promote and accelerate protein folding. This Chromobacterium violaceum (strain ATCC 12472 / DSM 30191 / JCM 1249 / CCUG 213 / NBRC 12614 / NCIMB 9131 / NCTC 9757 / MK) protein is Chaperonin GroEL 1.